Reading from the N-terminus, the 2221-residue chain is RNA-directed RNA polymerase L (2221 aa).

Positions K29–E292 are endonuclease. Mn(2+)-binding residues include E54, D91, and E104. K117 is a catalytic residue. Residues L1171–I1369 enclose the RdRp catalytic domain. D1327 contacts Mg(2+).

Belongs to the Bunyavirales RNA polymerase family. Homomultimer; the oligomeric structure is essential for the polymerase activity. Interacts with nucleoprotein N. Interacts with protein Z; this interaction inhibits viral transcription and replication, Z partially blocks the product exit tunnel for the releasing nascent RNA product. The cofactor is Mn(2+). Mg(2+) serves as cofactor.

The protein localises to the virion. Its subcellular location is the host cytoplasm. The enzyme catalyses RNA(n) + a ribonucleoside 5'-triphosphate = RNA(n+1) + diphosphate. RNA-dependent RNA polymerase, which is responsible for the replication and transcription of the viral RNA genome using antigenomic RNA as an intermediate. During transcription, synthesizes subgenomic RNAs and assures their capping by a cap-snatching mechanism, which involves the endonuclease activity cleaving the host capped pre-mRNAs. These short capped RNAs are then used as primers for viral transcription. The 3'-end of subgenomic mRNAs molecules are heterogeneous and not polyadenylated. The replicase function is to direct synthesis of antigenomic and genomic RNA which are encapsidated and non capped. As a consequence of the use of the same enzyme for both transcription and replication, these mechanisms need to be well coordinated. These processes may be regulated by proteins N and Z in a dose-dependent manner. Z protein inhibits the viral polymerase L und thus the viral transcription and RNA synthesis. The chain is RNA-directed RNA polymerase L from Sigmodon hispidus (Hispid cotton rat).